The sequence spans 1012 residues: Beta-alanine-activating enzyme (1012 aa).

ATP-binding positions include 177-185 (TTGTTGKPK), aspartate 411, arginine 426, and lysine 516.

Belongs to the ATP-dependent AMP-binding enzyme family.

Covalently binds beta-alanine in an ATP-dependent manner to form a thioester bond with its phosphopantetheine group and transfers it to an, as yet, unknown acceptor. May be required for a post-translational protein modification or for post-transcriptional modification of an RNA. The chain is Beta-alanine-activating enzyme from Drosophila melanogaster (Fruit fly).